Consider the following 647-residue polypeptide: Threonine--tRNA ligase (647 aa).

One can recognise a TGS domain in the interval 1 to 61 (MIKITFPDGA…EEDGSIEIVT (61 aa)). The interval 240 to 538 (DHRKLGKELD…LIETYKGAFP (299 aa)) is catalytic. Zn(2+) is bound by residues Cys334, His385, and His515.

Belongs to the class-II aminoacyl-tRNA synthetase family. As to quaternary structure, homodimer. Zn(2+) is required as a cofactor.

The protein resides in the cytoplasm. The catalysed reaction is tRNA(Thr) + L-threonine + ATP = L-threonyl-tRNA(Thr) + AMP + diphosphate + H(+). In terms of biological role, catalyzes the attachment of threonine to tRNA(Thr) in a two-step reaction: L-threonine is first activated by ATP to form Thr-AMP and then transferred to the acceptor end of tRNA(Thr). Also edits incorrectly charged L-seryl-tRNA(Thr). This chain is Threonine--tRNA ligase, found in Streptococcus pyogenes serotype M2 (strain MGAS10270).